Here is a 182-residue protein sequence, read N- to C-terminus: Large ribosomal subunit protein uL5 (182 aa).

The protein belongs to the universal ribosomal protein uL5 family. Part of the 50S ribosomal subunit; part of the 5S rRNA/L5/L18/L25 subcomplex. Contacts the 5S rRNA and the P site tRNA. Forms a bridge to the 30S subunit in the 70S ribosome.

This is one of the proteins that bind and probably mediate the attachment of the 5S RNA into the large ribosomal subunit, where it forms part of the central protuberance. In the 70S ribosome it contacts protein S13 of the 30S subunit (bridge B1b), connecting the 2 subunits; this bridge is implicated in subunit movement. Contacts the P site tRNA; the 5S rRNA and some of its associated proteins might help stabilize positioning of ribosome-bound tRNAs. In Acidobacterium capsulatum (strain ATCC 51196 / DSM 11244 / BCRC 80197 / JCM 7670 / NBRC 15755 / NCIMB 13165 / 161), this protein is Large ribosomal subunit protein uL5.